The primary structure comprises 184 residues: Ribosome maturation factor RimM (184 aa).

Residues 112 to 184 enclose the PRC barrel domain; the sequence is TDSYYWIDLI…SNKTISLDWQ (73 aa).

It belongs to the RimM family. Binds ribosomal protein uS19.

The protein resides in the cytoplasm. An accessory protein needed during the final step in the assembly of 30S ribosomal subunit, possibly for assembly of the head region. Essential for efficient processing of 16S rRNA. May be needed both before and after RbfA during the maturation of 16S rRNA. It has affinity for free ribosomal 30S subunits but not for 70S ribosomes. The protein is Ribosome maturation factor RimM of Polynucleobacter necessarius subsp. necessarius (strain STIR1).